The chain runs to 87 residues: MKTKLNELLEFPCPFTYKVMGIAQPELVDQVVEVVQRHAPGDYSPQVKPSSKGNYHSVSITITATHIEQVETLYEELGKIDIVRMVL.

It belongs to the UPF0250 family.

This chain is UPF0250 protein SG0794, found in Sodalis glossinidius (strain morsitans).